Reading from the N-terminus, the 316-residue chain is Aspartate carbamoyltransferase catalytic subunit (316 aa).

Residues Arg59 and Thr60 each contribute to the carbamoyl phosphate site. Lys88 contacts L-aspartate. Positions 109, 137, and 140 each coordinate carbamoyl phosphate. Residues Arg170 and Arg232 each contribute to the L-aspartate site. Carbamoyl phosphate contacts are provided by Leu269 and Pro270.

This sequence belongs to the aspartate/ornithine carbamoyltransferase superfamily. ATCase family. Heterooligomer of catalytic and regulatory chains.

The catalysed reaction is carbamoyl phosphate + L-aspartate = N-carbamoyl-L-aspartate + phosphate + H(+). The protein operates within pyrimidine metabolism; UMP biosynthesis via de novo pathway; (S)-dihydroorotate from bicarbonate: step 2/3. Its function is as follows. Catalyzes the condensation of carbamoyl phosphate and aspartate to form carbamoyl aspartate and inorganic phosphate, the committed step in the de novo pyrimidine nucleotide biosynthesis pathway. This chain is Aspartate carbamoyltransferase catalytic subunit, found in Methanobrevibacter smithii (strain ATCC 35061 / DSM 861 / OCM 144 / PS).